The sequence spans 179 residues: Large ribosomal subunit protein uL5 (179 aa).

This sequence belongs to the universal ribosomal protein uL5 family. As to quaternary structure, part of the 50S ribosomal subunit; part of the 5S rRNA/L5/L18/L25 subcomplex. Contacts the 5S rRNA and the P site tRNA. Forms a bridge to the 30S subunit in the 70S ribosome.

In terms of biological role, this is one of the proteins that bind and probably mediate the attachment of the 5S RNA into the large ribosomal subunit, where it forms part of the central protuberance. In the 70S ribosome it contacts protein S13 of the 30S subunit (bridge B1b), connecting the 2 subunits; this bridge is implicated in subunit movement. Contacts the P site tRNA; the 5S rRNA and some of its associated proteins might help stabilize positioning of ribosome-bound tRNAs. The polypeptide is Large ribosomal subunit protein uL5 (Neisseria gonorrhoeae (strain ATCC 700825 / FA 1090)).